Reading from the N-terminus, the 128-residue chain is Small ribosomal subunit protein uS9 (128 aa).

The segment covering 97 to 113 (RSEGFMTRDSRSVERKK) has biased composition (basic and acidic residues). Residues 97-128 (RSEGFMTRDSRSVERKKPGQPKARRRFQFSKR) form a disordered region. Over residues 114–128 (PGQPKARRRFQFSKR) the composition is skewed to basic residues.

It belongs to the universal ribosomal protein uS9 family.

The chain is Small ribosomal subunit protein uS9 from Phocaeicola vulgatus (strain ATCC 8482 / DSM 1447 / JCM 5826 / CCUG 4940 / NBRC 14291 / NCTC 11154) (Bacteroides vulgatus).